A 333-amino-acid polypeptide reads, in one-letter code: uncharacterized protein (333 aa).

One can recognise a Fe/B12 periplasmic-binding domain in the interval 45–318 (NVIVSDSMFI…EYVKIIHPKI (274 aa)).

This is an uncharacterized protein from Methanocaldococcus jannaschii (strain ATCC 43067 / DSM 2661 / JAL-1 / JCM 10045 / NBRC 100440) (Methanococcus jannaschii).